We begin with the raw amino-acid sequence, 390 residues long: Protein dimmed (390 aa).

The disordered stretch occupies residues 24 to 163; sequence HNNNNYNTDG…RNMRRLESNE (140 aa). 2 stretches are compositionally biased toward polar residues: residues 29 to 44 and 55 to 64; these read YNTDGHNGLSSESAEG and RTSQLSNNTY. N-linked (GlcNAc...) asparagine glycosylation is present at Asn-61. The segment covering 69-78 has biased composition (low complexity); it reads TDSSSQSDDT. The segment covering 79-90 has biased composition (gly residues); the sequence is SGGGGSSNGGGS. Positions 122–141 are enriched in low complexity; sequence PSTIAPNSTSSNSSNANGNA. N-linked (GlcNAc...) asparagine glycosylation is found at Asn-128, Asn-133, and Asn-140. Residues 151-163 are compositionally biased toward basic and acidic residues; it reads AKERNMRRLESNE. Residues 156–208 enclose the bHLH domain; that stretch reads MRRLESNERERMRMHSLNDAFQSLREVIPHVEMERRLSKIETLTLAKNYIINL. 2 N-linked (GlcNAc...) asparagine glycosylation sites follow: Asn-207 and Asn-237. Residues 312–339 form a disordered region; the sequence is QQQQASHLPHHQQAMHGHGHLGASIQSQ. An N-linked (GlcNAc...) asparagine glycan is attached at Asn-347.

Forms homodimers via the bHLH domain. These dimers bind the core E-box sequence. In terms of tissue distribution, detected in the developing nervous system in the bilateral domains in the cephalic region that later on forms part of the ring gland. Concomitantly expressed in the larval central nervous system (CNS), including the dorsal chain neurons as well as several bilateral clusters of neurons: large, midline protocerebral brain cells (MC), lateral protocerebral brain cells (LC), ventral subesophageal neurons (SE) and lateral abdominal neurons, and the transverse nerves. Outside the CNS, detected in at least three classes of endocrine cells: intrinsic cells of the corpora cardiaca, midgut cells, the Inka cells, lateral Bipolar neurons associated with the segmental transverse nerve, and several peptidergic cells of the enteric nervous system. Expressed only in central and peripheral neuroendocrine secretory cells and neurosecretory neurons but not in sensory or motor neurons.

It is found in the cytoplasm. Functionally, transcription factor that regulates neurosecretory (NS) cell function and neuroendocrine cell fate. Acts as a master regulator of common NS functions such as Phm expression and neuropeptide production. Plays a role as a regulator of peptide-containing large dense-core vesicle (LDCV) production and peptidergic cell differentiation. Controls transcription of FMRFamide in Tv neuronal cells and Fur1 in Ap-let cells (Tvb and dorsal apterous cells). Also required for up-regulation of Phm in Tv and Ap-let cells, and expression of three neuropeptide genes, Ms, FMRFamide and Lk. Influences both regulated and constitutive secretory activity in neuroendocrine cells at embryonic and postembryonic level. Loss of function studies show reduced cellular levels of various neuropeptides and neuropeptide biosynthetic enzymes. The chain is Protein dimmed (dimm) from Drosophila melanogaster (Fruit fly).